The sequence spans 253 residues: 3-deoxy-manno-octulosonate cytidylyltransferase (253 aa).

The protein belongs to the KdsB family.

It localises to the cytoplasm. It carries out the reaction 3-deoxy-alpha-D-manno-oct-2-ulosonate + CTP = CMP-3-deoxy-beta-D-manno-octulosonate + diphosphate. The protein operates within nucleotide-sugar biosynthesis; CMP-3-deoxy-D-manno-octulosonate biosynthesis; CMP-3-deoxy-D-manno-octulosonate from 3-deoxy-D-manno-octulosonate and CTP: step 1/1. Its pathway is bacterial outer membrane biogenesis; lipopolysaccharide biosynthesis. Activates KDO (a required 8-carbon sugar) for incorporation into bacterial lipopolysaccharide in Gram-negative bacteria. The protein is 3-deoxy-manno-octulosonate cytidylyltransferase of Geotalea daltonii (strain DSM 22248 / JCM 15807 / FRC-32) (Geobacter daltonii).